We begin with the raw amino-acid sequence, 350 residues long: Ion-translocating oxidoreductase complex subunit D (350 aa).

5 helical membrane passes run 20-40 (IMML…WFFG), 42-62 (GTLF…AAVL), 68-88 (PIAA…LAVS), 89-109 (IPPL…VIIA), and 123-143 (PAMI…TSWL). Residue Thr-187 is modified to FMN phosphoryl threonine. Transmembrane regions (helical) follow at residues 215-235 (LAGA…VWLL), 244-264 (IPVS…AFAG), 267-287 (LASP…FFIL), 301-321 (LIFG…GGYP), and 322-342 (DGVA…DYYT).

This sequence belongs to the NqrB/RnfD family. In terms of assembly, the complex is composed of six subunits: RnfA, RnfB, RnfC, RnfD, RnfE and RnfG. FMN is required as a cofactor.

It is found in the cell inner membrane. Its function is as follows. Part of a membrane-bound complex that couples electron transfer with translocation of ions across the membrane. This Citrobacter koseri (strain ATCC BAA-895 / CDC 4225-83 / SGSC4696) protein is Ion-translocating oxidoreductase complex subunit D.